An 84-amino-acid chain; its full sequence is Phosphoribosylformylglycinamidine synthase subunit PurS (84 aa).

The protein belongs to the PurS family. As to quaternary structure, homodimer or homotetramer. Part of the FGAM synthase complex composed of 1 PurL, 1 PurQ and 2 PurS subunits.

It localises to the cytoplasm. It catalyses the reaction N(2)-formyl-N(1)-(5-phospho-beta-D-ribosyl)glycinamide + L-glutamine + ATP + H2O = 2-formamido-N(1)-(5-O-phospho-beta-D-ribosyl)acetamidine + L-glutamate + ADP + phosphate + H(+). Its pathway is purine metabolism; IMP biosynthesis via de novo pathway; 5-amino-1-(5-phospho-D-ribosyl)imidazole from N(2)-formyl-N(1)-(5-phospho-D-ribosyl)glycinamide: step 1/2. Its function is as follows. Part of the phosphoribosylformylglycinamidine synthase complex involved in the purines biosynthetic pathway. Catalyzes the ATP-dependent conversion of formylglycinamide ribonucleotide (FGAR) and glutamine to yield formylglycinamidine ribonucleotide (FGAM) and glutamate. The FGAM synthase complex is composed of three subunits. PurQ produces an ammonia molecule by converting glutamine to glutamate. PurL transfers the ammonia molecule to FGAR to form FGAM in an ATP-dependent manner. PurS interacts with PurQ and PurL and is thought to assist in the transfer of the ammonia molecule from PurQ to PurL. The sequence is that of Phosphoribosylformylglycinamidine synthase subunit PurS from Bacillus subtilis (strain 168).